A 141-amino-acid polypeptide reads, in one-letter code: Hemoglobin subunit alpha-1/2 (141 aa).

The Globin domain occupies 1–141 (VLSPADKTNV…VSTVLTSKYR (141 aa)). Serine 3 bears the Phosphoserine mark. Lysine 7 carries the N6-succinyllysine modification. Threonine 8 bears the Phosphothreonine mark. At lysine 11 the chain carries N6-succinyllysine. The residue at position 16 (lysine 16) is an N6-acetyllysine; alternate. The residue at position 16 (lysine 16) is an N6-succinyllysine; alternate. Tyrosine 24 is subject to Phosphotyrosine. The residue at position 35 (serine 35) is a Phosphoserine. Residue lysine 40 is modified to N6-succinyllysine. The residue at position 49 (serine 49) is a Phosphoserine. Histidine 58 contributes to the O2 binding site. Histidine 87 provides a ligand contact to heme b. Phosphoserine is present on serine 102. Residue threonine 108 is modified to Phosphothreonine. A phosphoserine mark is found at serine 124 and serine 131. A phosphothreonine mark is found at threonine 134 and threonine 137. Serine 138 carries the post-translational modification Phosphoserine.

It belongs to the globin family. In terms of assembly, heterotetramer of two alpha chains and two beta chains. Red blood cells.

Functionally, involved in oxygen transport from the lung to the various peripheral tissues. The polypeptide is Hemoglobin subunit alpha-1/2 (Macaca sinica (Toque macaque)).